We begin with the raw amino-acid sequence, 217 residues long: Orotidine 5'-phosphate decarboxylase (217 aa).

Substrate is bound by residues D14, K36, 64–73 (DFKVADIPST), S120, 172–182 (PGVGAQGGNLS), G197, and R198. The active-site Proton donor is K66.

It belongs to the OMP decarboxylase family. Type 1 subfamily. Homodimer.

The enzyme catalyses orotidine 5'-phosphate + H(+) = UMP + CO2. It participates in pyrimidine metabolism; UMP biosynthesis via de novo pathway; UMP from orotate: step 2/2. Catalyzes the decarboxylation of orotidine 5'-monophosphate (OMP) to uridine 5'-monophosphate (UMP). This chain is Orotidine 5'-phosphate decarboxylase, found in Methanococcus maripaludis (strain DSM 14266 / JCM 13030 / NBRC 101832 / S2 / LL).